We begin with the raw amino-acid sequence, 267 residues long: D-aminoacyl-tRNA deacylase (267 aa).

The protein belongs to the DtdA deacylase family. In terms of assembly, monomer. Zn(2+) is required as a cofactor.

It carries out the reaction a D-aminoacyl-tRNA + H2O = a tRNA + a D-alpha-amino acid + H(+). It catalyses the reaction glycyl-tRNA(Ala) + H2O = tRNA(Ala) + glycine + H(+). In terms of biological role, D-aminoacyl-tRNA deacylase with broad substrate specificity. By recycling D-aminoacyl-tRNA to D-amino acids and free tRNA molecules, this enzyme counteracts the toxicity associated with the formation of D-aminoacyl-tRNA entities in vivo. This is D-aminoacyl-tRNA deacylase from Methanothrix thermoacetophila (strain DSM 6194 / JCM 14653 / NBRC 101360 / PT) (Methanosaeta thermophila).